Reading from the N-terminus, the 138-residue chain is Large ribosomal subunit protein uL16 (138 aa).

The protein belongs to the universal ribosomal protein uL16 family. In terms of assembly, part of the 50S ribosomal subunit.

Binds 23S rRNA and is also seen to make contacts with the A and possibly P site tRNAs. The sequence is that of Large ribosomal subunit protein uL16 from Nitrosomonas europaea (strain ATCC 19718 / CIP 103999 / KCTC 2705 / NBRC 14298).